The primary structure comprises 317 residues: Putrescine transport system permease protein PotH (317 aa).

The Cytoplasmic segment spans residues 1–31 (MSTLEPAAQSKPPGGFKLWLSQLQMKHGRKL). A helical membrane pass occupies residues 32 to 51 (VIALPYIWLILLFLLPFLIV). Topologically, residues 52-104 (FKISLAEMARAIPPYTELMEWADGQLSITLNLGNFLQLTDDPLYFDAYLQSLQ) are periplasmic. Positions 99–305 (YLQSLQVAAI…LLLIVPIMWF (207 aa)) constitute an ABC transmembrane type-1 domain. The helical transmembrane segment at 105–124 (VAAISTFCCLLIGYPLAWAV) threads the bilayer. The Cytoplasmic segment spans residues 125 to 133 (AHSKPSTRN). A helical transmembrane segment spans residues 134–153 (ILLLLVILPSWTSFLIRVYA). Over 154 to 184 (WMGILKNNGVLNNFLLWLGVIDQPLTILHTN) the chain is Periplasmic. The helical transmembrane segment at 185–204 (LAVYIGIVYAYVPFMVLPIY) threads the bilayer. Residues 205–239 (TALIRIDYSLVEAALDLGARPLKTFFTVIVPLTKG) are Cytoplasmic-facing. A helical membrane pass occupies residues 240–259 (GIIAGSMLVFIPAVGEFVIP). Topologically, residues 260-284 (ELLGGPDSIMIGRVLWQEFFNNRDW) are periplasmic. A helical membrane pass occupies residues 285 to 304 (PVASAVAIIMLLLLIVPIMW). The Cytoplasmic segment spans residues 305 to 317 (FHKHQQKSVGEHG).

The protein belongs to the binding-protein-dependent transport system permease family. CysTW subfamily. In terms of assembly, the complex is composed of two ATP-binding proteins (PotG), two transmembrane proteins (PotH and PotI) and a solute-binding protein (PotF).

The protein resides in the cell inner membrane. Its activity is regulated as follows. Transport is feedback inhibited by intracellular polyamines. Functionally, part of the ABC transporter complex PotFGHI involved in putrescine uptake. Responsible for the translocation of the substrate across the membrane. Imports putrescine for maintenance of the optimal concentration of polyamines necessary for cell growth in the presence of glucose. The chain is Putrescine transport system permease protein PotH from Escherichia coli (strain K12).